A 569-amino-acid polypeptide reads, in one-letter code: CTP synthase (569 aa).

Positions 1–272 (MARPKNVKHI…DSRVLKKLGI (272 aa)) are amidoligase domain. Ser-18 serves as a coordination point for CTP. Ser-18 serves as a coordination point for UTP. 19 to 24 (SLGKGI) provides a ligand contact to ATP. Tyr-59 is an L-glutamine binding site. ATP is bound at residue Asp-76. Asp-76 and Glu-146 together coordinate Mg(2+). CTP contacts are provided by residues 153-155 (DIE), 193-198 (KTKPTQ), and Lys-229. Residues 193-198 (KTKPTQ) and Lys-229 contribute to the UTP site. Positions 299–543 (TIGICGKYTE…VAAAKDYARG (245 aa)) constitute a Glutamine amidotransferase type-1 domain. Gly-363 is an L-glutamine binding site. Cys-390 (nucleophile; for glutamine hydrolysis) is an active-site residue. L-glutamine-binding positions include 391–394 (LGMQ), Glu-414, and Arg-471. Residues His-516 and Glu-518 contribute to the active site.

It belongs to the CTP synthase family. As to quaternary structure, homotetramer.

It catalyses the reaction UTP + L-glutamine + ATP + H2O = CTP + L-glutamate + ADP + phosphate + 2 H(+). It carries out the reaction L-glutamine + H2O = L-glutamate + NH4(+). The enzyme catalyses UTP + NH4(+) + ATP = CTP + ADP + phosphate + 2 H(+). It participates in pyrimidine metabolism; CTP biosynthesis via de novo pathway; CTP from UDP: step 2/2. Its activity is regulated as follows. Allosterically activated by GTP, when glutamine is the substrate; GTP has no effect on the reaction when ammonia is the substrate. The allosteric effector GTP functions by stabilizing the protein conformation that binds the tetrahedral intermediate(s) formed during glutamine hydrolysis. Inhibited by the product CTP, via allosteric rather than competitive inhibition. Its function is as follows. Catalyzes the ATP-dependent amination of UTP to CTP with either L-glutamine or ammonia as the source of nitrogen. Regulates intracellular CTP levels through interactions with the four ribonucleotide triphosphates. In Chlorobium chlorochromatii (strain CaD3), this protein is CTP synthase.